The sequence spans 227 residues: Nudix hydrolase 27, chloroplastic (227 aa).

Residues 1-44 (MAVKASGFIGKSAISVHLDFSSFPVKFSCLKQFSVSSPKPLVVL) constitute a chloroplast transit peptide. The region spanning 61-208 (GYRKNVGICL…KRPVYEHVIK (148 aa)) is the Nudix hydrolase domain. The Nudix box signature appears at 94–115 (GGADEGEDLRNAAFRELREETG). The Mn(2+) site is built by Glu109 and Glu113.

This sequence belongs to the Nudix hydrolase family. It depends on Mg(2+) as a cofactor. The cofactor is Mn(2+). In terms of tissue distribution, expressed in roots, leaves, stems and inflorescences.

Its subcellular location is the plastid. It localises to the chloroplast. Functionally, mediates the hydrolysis of some nucleoside diphosphate derivatives. Can use diadenosine 5',5'''-P(1)P(5) pentaphosphate (Ap(5)A) as substrates. This is Nudix hydrolase 27, chloroplastic (NUDT27) from Arabidopsis thaliana (Mouse-ear cress).